The chain runs to 823 residues: Tax1-binding protein 1 homolog B (823 aa).

A coiled-coil region spans residues 149-487 (VTTKASYLEQ…QKQVVKFNEQ (339 aa)). 2 disordered regions span residues 342–377 (HRQLLANSSPSGESKALREQLRQKEEQLQATQQQAN) and 486–519 (EQQGVKRSPGSDAAAGPLSASPEASAPGSPSTSD). Basic and acidic residues predominate over residues 356–368 (KALREQLRQKEEQ). Low complexity predominate over residues 498–518 (AAAGPLSASPEASAPGSPSTS). Residues 548–638 (QMLNEERERC…NREEEQKDSN (91 aa)) adopt a coiled-coil conformation. Residues 650–746 (MPYAQDDPSP…EPAAPEPAEF (97 aa)) are disordered. The segment covering 723–739 (LEEPEEPQSTQNDDEPA) has biased composition (acidic residues). 2 consecutive UBZ1-type zinc fingers follow at residues 762–788 (QKRCPLCEVIFPPHYDQSKFEEHVESH) and 789–815 (WKICPMCSEQFPLDCDQQLFEKHVLTH). Positions 765, 768, 784, 788, 792, 795, 811, and 815 each coordinate Zn(2+).

Expressed at relatively high levels in both proximal and distal regions of the fin bud during pectoral fin development.

In terms of biological role, may have anti-apoptotic activity. The protein is Tax1-binding protein 1 homolog B (tax1bp1b) of Danio rerio (Zebrafish).